The following is a 274-amino-acid chain: NAD-dependent protein deacetylase (274 aa).

Residues 1–274 (MDSRMSDLQA…CDEVLAEVVP (274 aa)) enclose the Deacetylase sirtuin-type domain. NAD(+) contacts are provided by residues 26–46 (GAGCSTASGIPDYRDGQGQWK) and 104–107 (QNVD). The active-site Proton acceptor is the His122. The Zn(2+) site is built by Cys130, Cys133, Cys181, and Cys184. Residues 221-223 (GSS), 247-249 (NLG), and Cys265 each bind NAD(+).

This sequence belongs to the sirtuin family. Class II subfamily. The cofactor is Zn(2+).

The protein localises to the cytoplasm. It catalyses the reaction N(6)-acetyl-L-lysyl-[protein] + NAD(+) + H2O = 2''-O-acetyl-ADP-D-ribose + nicotinamide + L-lysyl-[protein]. Functionally, NAD-dependent protein deacetylase which modulates the activities of several enzymes which are inactive in their acetylated form. This is NAD-dependent protein deacetylase from Bordetella pertussis (strain Tohama I / ATCC BAA-589 / NCTC 13251).